A 164-amino-acid chain; its full sequence is UPF0303 protein RHECIAT_CH0003058 (164 aa).

Belongs to the UPF0303 family.

The polypeptide is UPF0303 protein RHECIAT_CH0003058 (Rhizobium etli (strain CIAT 652)).